Consider the following 495-residue polypeptide: Serine/threonine-protein kinase STN8, chloroplastic (495 aa).

The N-terminal 49 residues, M1 to R49, are a transit peptide targeting the chloroplast. One can recognise a Protein kinase domain in the interval F133–F477. Residues L139–V147 and K186 contribute to the ATP site. The active-site Proton acceptor is D308.

Belongs to the protein kinase superfamily. Ser/Thr protein kinase family.

It is found in the plastid. The protein localises to the chloroplast thylakoid. It carries out the reaction L-seryl-[protein] + ATP = O-phospho-L-seryl-[protein] + ADP + H(+). It catalyses the reaction L-threonyl-[protein] + ATP = O-phospho-L-threonyl-[protein] + ADP + H(+). In terms of biological role, light-dependent serine/threonine protein kinase that specifically phosphorylates N-terminal threonine residues in psbA/D1, psbD/D2, psbC/CP43 and psbH, which are components of the core antenna complex of photosystem II. Phosphorylation of PSII core components facilitates the exchange of chlorophyll proteins between the grana and the stroma lamellae. Also involved in the phosphorylation of the calcium-sensing receptor (CaS). The sequence is that of Serine/threonine-protein kinase STN8, chloroplastic (STN8) from Arabidopsis thaliana (Mouse-ear cress).